The chain runs to 474 residues: tRNA-2-methylthio-N(6)-dimethylallyladenosine synthase (474 aa).

An MTTase N-terminal domain is found at 3–120 (KKLHIKTWGC…LPEMINSVRG (118 aa)). [4Fe-4S] cluster is bound by residues Cys12, Cys49, Cys83, Cys157, Cys161, and Cys164. Residues 143-375 (RAEGPTAFVS…QERINQQAMA (233 aa)) form the Radical SAM core domain. The TRAM domain occupies 378–441 (RRMLGTTQRI…PNSLRGKVVR (64 aa)).

It belongs to the methylthiotransferase family. MiaB subfamily. Monomer. The cofactor is [4Fe-4S] cluster.

The protein localises to the cytoplasm. The enzyme catalyses N(6)-dimethylallyladenosine(37) in tRNA + (sulfur carrier)-SH + AH2 + 2 S-adenosyl-L-methionine = 2-methylsulfanyl-N(6)-dimethylallyladenosine(37) in tRNA + (sulfur carrier)-H + 5'-deoxyadenosine + L-methionine + A + S-adenosyl-L-homocysteine + 2 H(+). It catalyses the reaction N(6)-dimethylallyladenosine(37) in tRNA + (sulfur carrier)-SH + AH2 + S-adenosyl-L-methionine = 2-thio-N(6)-dimethylallyladenosine(37) in tRNA + (sulfur carrier)-H + 5'-deoxyadenosine + L-methionine + A + H(+). It carries out the reaction 2-thio-N(6)-dimethylallyladenosine(37) in tRNA + S-adenosyl-L-methionine = 2-methylsulfanyl-N(6)-dimethylallyladenosine(37) in tRNA + S-adenosyl-L-homocysteine + H(+). Catalyzes the methylthiolation of N6-(dimethylallyl)adenosine (i(6)A), leading to the formation of 2-methylthio-N6-(dimethylallyl)adenosine (ms(2)i(6)A) at position 37 in tRNAs that read codons beginning with uridine. This Salmonella typhimurium (strain LT2 / SGSC1412 / ATCC 700720) protein is tRNA-2-methylthio-N(6)-dimethylallyladenosine synthase.